The sequence spans 338 residues: Methionine synthase (338 aa).

Zn(2+) is bound by residues H210, C212, E234, and C294.

The protein belongs to the archaeal MetE family. It depends on Zn(2+) as a cofactor.

It functions in the pathway amino-acid biosynthesis; L-methionine biosynthesis via de novo pathway. Its function is as follows. Catalyzes the transfer of a methyl group to L-homocysteine resulting in methionine formation. The physiological methyl donor is unknown. The chain is Methionine synthase from Pyrococcus furiosus (strain ATCC 43587 / DSM 3638 / JCM 8422 / Vc1).